Reading from the N-terminus, the 367-residue chain is tRNA uridine(34) hydroxylase (367 aa).

The region spanning 159 to 253 (EDENSIVVDV…YAHEVSQKGL (95 aa)) is the Rhodanese domain. Residue cysteine 213 is the Cysteine persulfide intermediate of the active site.

Belongs to the TrhO family.

The enzyme catalyses uridine(34) in tRNA + AH2 + O2 = 5-hydroxyuridine(34) in tRNA + A + H2O. Functionally, catalyzes oxygen-dependent 5-hydroxyuridine (ho5U) modification at position 34 in tRNAs. This is tRNA uridine(34) hydroxylase from Leptospira interrogans serogroup Icterohaemorrhagiae serovar Lai (strain 56601).